Here is a 439-residue protein sequence, read N- to C-terminus: Xylose isomerase (439 aa).

Active-site residues include H101 and D104. Residues E232, E268, H271, D296, D307, D309, and D339 each coordinate Mg(2+).

The protein belongs to the xylose isomerase family. Homotetramer. It depends on Mg(2+) as a cofactor.

Its subcellular location is the cytoplasm. The catalysed reaction is alpha-D-xylose = alpha-D-xylulofuranose. This Haemophilus influenzae (strain PittGG) protein is Xylose isomerase.